The sequence spans 932 residues: Glycine dehydrogenase (decarboxylating) (932 aa).

N6-(pyridoxal phosphate)lysine is present on lysine 685.

This sequence belongs to the GcvP family. The glycine cleavage system is composed of four proteins: P, T, L and H. Requires pyridoxal 5'-phosphate as cofactor.

It catalyses the reaction N(6)-[(R)-lipoyl]-L-lysyl-[glycine-cleavage complex H protein] + glycine + H(+) = N(6)-[(R)-S(8)-aminomethyldihydrolipoyl]-L-lysyl-[glycine-cleavage complex H protein] + CO2. Functionally, the glycine cleavage system catalyzes the degradation of glycine. The P protein binds the alpha-amino group of glycine through its pyridoxal phosphate cofactor; CO(2) is released and the remaining methylamine moiety is then transferred to the lipoamide cofactor of the H protein. The protein is Glycine dehydrogenase (decarboxylating) of Brucella melitensis biotype 2 (strain ATCC 23457).